Consider the following 257-residue polypeptide: Receptor expression-enhancing protein 4 (257 aa).

2 helical membrane passes run 1–21 and 42–62; these read MVSWMICRLVVLVFGMLCPAY and WIVFALFMAAEIVTDIFISWF. A phosphoserine mark is found at Ser152 and Ser194. Residues 183 to 257 are disordered; it reads PIGYRAGGLQ…KKTVPSDVDS (75 aa). Thr196 is subject to Phosphothreonine. Residue Ser202 is modified to Phosphoserine. Thr250 is modified (phosphothreonine). A Phosphoserine modification is found at Ser253.

Belongs to the DP1 family. Expressed in circumvallate papillae and testis.

It is found in the endoplasmic reticulum membrane. Microtubule-binding protein required to ensure proper cell division and nuclear envelope reassembly by sequestering the endoplasmic reticulum away from chromosomes during mitosis. Probably acts by clearing the endoplasmic reticulum membrane from metaphase chromosomes. The protein is Receptor expression-enhancing protein 4 (REEP4) of Homo sapiens (Human).